Consider the following 450-residue polypeptide: Molybdate-anion transporter (450 aa).

12 helical membrane-spanning segments follow: residues 1–21 (MLVT…GLEL), 43–63 (LDFY…APYL), 79–99 (ILYV…SSLV), 128–148 (FVLL…FSAF), 174–194 (AAFW…AVAS), 195–215 (WIGL…ALAG), 249–269 (VLLL…FVFL), 278–298 (GAPL…GSSL), 311–331 (PMHL…MLTF), 344–364 (FIAF…MSFL), 376–396 (GVLN…LLVL), and 409–429 (FSIC…LFTV).

Belongs to the major facilitator superfamily. In terms of tissue distribution, expressed ubiquitously but at relatively higher levels in the olfactory bulb and the skeletal muscle.

The protein localises to the cell membrane. Its function is as follows. Mediates high-affinity intracellular uptake of the rare oligo-element molybdenum. This Homo sapiens (Human) protein is Molybdate-anion transporter (MFSD5).